Consider the following 667-residue polypeptide: DNA ligase (667 aa).

Residues 34–38, 83–84, and glutamate 112 each bind NAD(+); these read DSEYD and SL. Lysine 114 acts as the N6-AMP-lysine intermediate in catalysis. The NAD(+) site is built by arginine 135, glutamate 169, lysine 285, and lysine 309. Residues cysteine 403, cysteine 406, cysteine 421, and cysteine 426 each coordinate Zn(2+). Residues 589–667 enclose the BRCT domain; that stretch reads ASDSYFAGKT…EARLISELKK (79 aa).

It belongs to the NAD-dependent DNA ligase family. LigA subfamily. Mg(2+) serves as cofactor. Mn(2+) is required as a cofactor.

The catalysed reaction is NAD(+) + (deoxyribonucleotide)n-3'-hydroxyl + 5'-phospho-(deoxyribonucleotide)m = (deoxyribonucleotide)n+m + AMP + beta-nicotinamide D-nucleotide.. Its function is as follows. DNA ligase that catalyzes the formation of phosphodiester linkages between 5'-phosphoryl and 3'-hydroxyl groups in double-stranded DNA using NAD as a coenzyme and as the energy source for the reaction. It is essential for DNA replication and repair of damaged DNA. The sequence is that of DNA ligase from Bacillus licheniformis (strain ATCC 14580 / DSM 13 / JCM 2505 / CCUG 7422 / NBRC 12200 / NCIMB 9375 / NCTC 10341 / NRRL NRS-1264 / Gibson 46).